The sequence spans 232 residues: Glutathione S-transferase U10 (232 aa).

Positions 6–85 (SKVILHGTWI…YIDETWTNSP (80 aa)) constitute a GST N-terminal domain. Glutathione is bound by residues 16 to 17 (ST), 42 to 43 (NK), 56 to 57 (KI), and 69 to 70 (ES). A GST C-terminal domain is found at 91–226 (DPYERAQVRF…FIQKYRQKCL (136 aa)).

This sequence belongs to the GST superfamily. Tau family.

The protein localises to the cytoplasm. The protein resides in the cytosol. It carries out the reaction RX + glutathione = an S-substituted glutathione + a halide anion + H(+). May be involved in the conjugation of reduced glutathione to a wide number of exogenous and endogenous hydrophobic electrophiles and have a detoxification role against certain herbicides. This chain is Glutathione S-transferase U10 (GSTU10), found in Arabidopsis thaliana (Mouse-ear cress).